The sequence spans 134 residues: D-ribose pyranase (134 aa).

His20 acts as the Proton donor in catalysis. Substrate-binding positions include Asp28, His99, and Phe123–Asn125.

It belongs to the RbsD / FucU family. RbsD subfamily. In terms of assembly, homodecamer.

Its subcellular location is the cytoplasm. The enzyme catalyses beta-D-ribopyranose = beta-D-ribofuranose. It participates in carbohydrate metabolism; D-ribose degradation; D-ribose 5-phosphate from beta-D-ribopyranose: step 1/2. Its function is as follows. Catalyzes the interconversion of beta-pyran and beta-furan forms of D-ribose. The chain is D-ribose pyranase from Staphylococcus carnosus (strain TM300).